Reading from the N-terminus, the 242-residue chain is Caffeoyl-CoA O-methyltransferase 3 (242 aa).

K16 contributes to the substrate binding site. S-adenosyl-L-methionine contacts are provided by residues T58, E80, 82-83 (GV), S88, D106, and A135. D158 is a substrate binding site. An a divalent metal cation-binding site is contributed by D158. D160 is a binding site for S-adenosyl-L-methionine. A divalent metal cation-binding residues include D184 and N185. Residue N189 participates in substrate binding.

It belongs to the class I-like SAM-binding methyltransferase superfamily. Cation-dependent O-methyltransferase family. CCoAMT subfamily. Requires Mg(2+) as cofactor. In terms of tissue distribution, mostly expressed in the bottom and middle parts of the stems.

It carries out the reaction (E)-caffeoyl-CoA + S-adenosyl-L-methionine = (E)-feruloyl-CoA + S-adenosyl-L-homocysteine + H(+). Its pathway is aromatic compound metabolism; phenylpropanoid biosynthesis. Functionally, methylates caffeoyl-CoA to feruloyl-CoA and 5-hydroxyferuloyl-CoA to sinapoyl-CoA. Plays a role in the synthesis of feruloylated polysaccharides. Involved in the reinforcement of the plant cell wall. Also involved in the responding to wounding or pathogen challenge by the increased formation of cell wall-bound ferulic acid polymers. Also methylates free caffeic and 5-hydroxyferulic acids. This is Caffeoyl-CoA O-methyltransferase 3 (CCOAOMT3) from Nicotiana tabacum (Common tobacco).